Here is a 788-residue protein sequence, read N- to C-terminus: Cadherin-10 (788 aa).

The signal sequence occupies residues 1-22 (MTIHQFLLLFLFWVCLPHFCSP). Positions 23 to 54 (EIMFRRTPVPQQRILSSRVPRSDGKILHRQKR) are excised as a propeptide. 5 Cadherin domains span residues 55–160 (GWMW…EPTF), 161–269 (PEEI…PPRF), 270–384 (PQNT…PPVF), 385–487 (SRSS…DNAP), and 488–606 (QFAV…LLLP). At 55-613 (GWMWNQFFLL…LLPAGLSTGA (559 aa)) the chain is on the extracellular side. Asparagine 256 is a glycosylation site (N-linked (GlcNAc...) asparagine). Asparagine 438, asparagine 456, and asparagine 534 each carry an N-linked (GlcNAc...) asparagine glycan. A helical transmembrane segment spans residues 614 to 634 (LIAILLCIIILLVIVVLFAAL). At 635-788 (KRQRKKEPLI…YGGGESDKDS (154 aa)) the chain is on the cytoplasmic side. Residues serine 784 and serine 788 each carry the phosphoserine modification.

In terms of tissue distribution, predominantly expressed in brain. Also found in adult and fetal kidney. Very low levels detected in prostate and fetal lung.

It is found in the cell membrane. Cadherins are calcium-dependent cell adhesion proteins. They preferentially interact with themselves in a homophilic manner in connecting cells; cadherins may thus contribute to the sorting of heterogeneous cell types. The chain is Cadherin-10 (CDH10) from Homo sapiens (Human).